The chain runs to 348 residues: MAIIQLSNIKKQYENGILVIDDLNLTVADSELLVLVGPSGCGKSTLLRIIAGLEQVTSGELYIDDERINDREPADRDIAMVFQNYALYPHMTVRGNLEYGLKNRKTPKDEINRRITHAAKLLEIESFLDRKPRQLSGGQRQRVAMGRVIVRQPRVFLFDEPLSNLDAKLRAQMCIEIKTLQRSLGTTSLYVTHDQLEAMTLADRIAVINKGAIEQIGTPIEIYDTPETTFVADFIGSPPMNFLDRKILEQHLGYSFSYNKETDLLAFRPEVILLGEYPDKGPVFHTQIELIKPIGTGCHVLTRWNETIFTIEIKERLTNDYGKKLSFTVPHQNFHTFNKTTGKRKSNK.

Residues 4–235 (IQLSNIKKQY…PETTFVADFI (232 aa)) enclose the ABC transporter domain. 37–44 (GPSGCGKS) lines the ATP pocket.

Belongs to the ABC transporter superfamily. sn-glycerol-3-phosphate importer (TC 3.A.1.1.3) family. The complex is composed of two ATP-binding proteins (UgpC), two transmembrane proteins (UgpA and UgpE) and a solute-binding protein (UgpB).

Its subcellular location is the cell inner membrane. It carries out the reaction sn-glycerol 3-phosphate(out) + ATP + H2O = sn-glycerol 3-phosphate(in) + ADP + phosphate + H(+). In terms of biological role, part of the ABC transporter complex UgpBAEC involved in sn-glycerol-3-phosphate (G3P) import. Responsible for energy coupling to the transport system. The sequence is that of sn-glycerol-3-phosphate import ATP-binding protein UgpC from Bartonella quintana (strain Toulouse) (Rochalimaea quintana).